The sequence spans 323 residues: Deaminated glutathione amidase (323 aa).

Residues 1 to 33 constitute a mitochondrion transit peptide; that stretch reads MLGFITRPPHQLLCTGYRLLRTPVLCTQPRPRT. Residues 42 to 294 form the CN hydrolase domain; it reads LPLVAVCQVT…PGLCLARIDL (253 aa). The active-site Proton acceptor is the glutamate 82. The active-site Proton donor is lysine 157. Cysteine 199 serves as the catalytic Nucleophile.

Belongs to the carbon-nitrogen hydrolase superfamily. NIT1/NIT2 family. Expressed in most tissues with higher expression in adult liver and kidney as well as in fetal adrenal gland and skeletal muscle.

It is found in the mitochondrion. The protein resides in the cytoplasm. The enzyme catalyses N-(4-oxoglutaryl)-L-cysteinylglycine + H2O = L-cysteinylglycine + 2-oxoglutarate. It catalyses the reaction N-(4-carboxy-4-oxobutanoyl)-L-ethylglycylglycine + H2O = N-(2-aminobutanoyl)glycine + 2-oxoglutarate. Its function is as follows. Catalyzes the hydrolysis of the amide bond in N-(4-oxoglutarate)-L-cysteinylglycine (deaminated glutathione), a metabolite repair reaction to dispose of the harmful deaminated glutathione. Possesses amidase activity toward deaminated ophthalmate in vitro. Plays a role in cell growth and apoptosis: loss of expression promotes cell growth, resistance to DNA damage stress and increased incidence to NMBA-induced tumors. Has tumor suppressor properties that enhances the apoptotic responsiveness in cancer cells; this effect is additive to the tumor suppressor activity of FHIT. It is also a negative regulator of primary T-cells. The polypeptide is Deaminated glutathione amidase (Mus musculus (Mouse)).